The chain runs to 424 residues: UDP-N-acetylglucosamine 1-carboxyvinyltransferase (424 aa).

Residue 22–23 (KN) participates in phosphoenolpyruvate binding. A UDP-N-acetyl-alpha-D-glucosamine-binding site is contributed by arginine 93. Catalysis depends on cysteine 117, which acts as the Proton donor. Cysteine 117 bears the 2-(S-cysteinyl)pyruvic acid O-phosphothioketal mark. Residues 122 to 126 (RPVDL), 162 to 165 (KVSV), aspartate 307, and isoleucine 329 each bind UDP-N-acetyl-alpha-D-glucosamine.

It belongs to the EPSP synthase family. MurA subfamily.

Its subcellular location is the cytoplasm. It carries out the reaction phosphoenolpyruvate + UDP-N-acetyl-alpha-D-glucosamine = UDP-N-acetyl-3-O-(1-carboxyvinyl)-alpha-D-glucosamine + phosphate. Its pathway is cell wall biogenesis; peptidoglycan biosynthesis. In terms of biological role, cell wall formation. Adds enolpyruvyl to UDP-N-acetylglucosamine. This is UDP-N-acetylglucosamine 1-carboxyvinyltransferase from Haemophilus influenzae (strain PittEE).